We begin with the raw amino-acid sequence, 59 residues long: Potassium channel toxin alpha-KTx 15.4 (59 aa).

Residues Met1–Cys22 form the signal peptide. Gln23 is subject to Pyrrolidone carboxylic acid. 3 disulfide bridges follow: Cys30–Cys50, Cys35–Cys55, and Cys39–Cys57.

As to expression, expressed by the venom gland.

The protein localises to the secreted. Its function is as follows. Blocker of A-type voltage-gated potassium channels of cerebellar granular cells. May also inhibit Kv4/KCND when coexpressed with DPP6 or DPP10. The occlusion of the outer entry of the K(+) conducting pore is partially reversible and affects both open and closed channels. It shares the same target in rat brain than BmTX3 (AC Q8I0L5) and AmmTX3 (AC P60208). This Androctonus australis (Sahara scorpion) protein is Potassium channel toxin alpha-KTx 15.4.